A 141-amino-acid chain; its full sequence is Large ribosomal subunit protein uL11 (141 aa).

The protein belongs to the universal ribosomal protein uL11 family. In terms of assembly, part of the ribosomal stalk of the 50S ribosomal subunit. Interacts with L10 and the large rRNA to form the base of the stalk. L10 forms an elongated spine to which L12 dimers bind in a sequential fashion forming a multimeric L10(L12)X complex. In terms of processing, one or more lysine residues are methylated.

In terms of biological role, forms part of the ribosomal stalk which helps the ribosome interact with GTP-bound translation factors. The polypeptide is Large ribosomal subunit protein uL11 (Brevibacillus brevis (strain 47 / JCM 6285 / NBRC 100599)).